A 227-amino-acid chain; its full sequence is Cytochrome c oxidase subunit 2 (227 aa).

The Mitochondrial intermembrane segment spans residues 1–14 (MAYPFQLGFQDATS). A helical transmembrane segment spans residues 15–45 (PIMEELLHFHDHTLMIVFLISSLVLYIISLM). Residues 46-59 (LTTKLTHTSTMDAQ) lie on the Mitochondrial matrix side of the membrane. Residues 60 to 87 (EVETIWTILPAIILILIALPSLRILYMM) traverse the membrane as a helical segment. The Mitochondrial intermembrane portion of the chain corresponds to 88–227 (DEINNPSLTV…YFEKWSASML (140 aa)). Cu cation is bound by residues His-161, Cys-196, Glu-198, Cys-200, His-204, and Met-207. Position 198 (Glu-198) interacts with Mg(2+). Residue Tyr-218 is modified to Phosphotyrosine.

Belongs to the cytochrome c oxidase subunit 2 family. Component of the cytochrome c oxidase (complex IV, CIV), a multisubunit enzyme composed of 14 subunits. The complex is composed of a catalytic core of 3 subunits MT-CO1, MT-CO2 and MT-CO3, encoded in the mitochondrial DNA, and 11 supernumerary subunits COX4I, COX5A, COX5B, COX6A, COX6B, COX6C, COX7A, COX7B, COX7C, COX8 and NDUFA4, which are encoded in the nuclear genome. The complex exists as a monomer or a dimer and forms supercomplexes (SCs) in the inner mitochondrial membrane with NADH-ubiquinone oxidoreductase (complex I, CI) and ubiquinol-cytochrome c oxidoreductase (cytochrome b-c1 complex, complex III, CIII), resulting in different assemblies (supercomplex SCI(1)III(2)IV(1) and megacomplex MCI(2)III(2)IV(2)). Found in a complex with TMEM177, COA6, COX18, COX20, SCO1 and SCO2. Interacts with TMEM177 in a COX20-dependent manner. Interacts with COX20. Interacts with COX16. The cofactor is Cu cation.

The protein localises to the mitochondrion inner membrane. The catalysed reaction is 4 Fe(II)-[cytochrome c] + O2 + 8 H(+)(in) = 4 Fe(III)-[cytochrome c] + 2 H2O + 4 H(+)(out). In terms of biological role, component of the cytochrome c oxidase, the last enzyme in the mitochondrial electron transport chain which drives oxidative phosphorylation. The respiratory chain contains 3 multisubunit complexes succinate dehydrogenase (complex II, CII), ubiquinol-cytochrome c oxidoreductase (cytochrome b-c1 complex, complex III, CIII) and cytochrome c oxidase (complex IV, CIV), that cooperate to transfer electrons derived from NADH and succinate to molecular oxygen, creating an electrochemical gradient over the inner membrane that drives transmembrane transport and the ATP synthase. Cytochrome c oxidase is the component of the respiratory chain that catalyzes the reduction of oxygen to water. Electrons originating from reduced cytochrome c in the intermembrane space (IMS) are transferred via the dinuclear copper A center (CU(A)) of subunit 2 and heme A of subunit 1 to the active site in subunit 1, a binuclear center (BNC) formed by heme A3 and copper B (CU(B)). The BNC reduces molecular oxygen to 2 water molecules using 4 electrons from cytochrome c in the IMS and 4 protons from the mitochondrial matrix. This chain is Cytochrome c oxidase subunit 2 (MT-CO2), found in Felis catus (Cat).